The sequence spans 467 residues: ATP synthase subunit beta (467 aa).

150 to 157 (GGAGVGKT) contacts ATP.

It belongs to the ATPase alpha/beta chains family. In terms of assembly, F-type ATPases have 2 components, CF(1) - the catalytic core - and CF(0) - the membrane proton channel. CF(1) has five subunits: alpha(3), beta(3), gamma(1), delta(1), epsilon(1). CF(0) has three main subunits: a(1), b(2) and c(9-12). The alpha and beta chains form an alternating ring which encloses part of the gamma chain. CF(1) is attached to CF(0) by a central stalk formed by the gamma and epsilon chains, while a peripheral stalk is formed by the delta and b chains.

The protein localises to the cell inner membrane. It carries out the reaction ATP + H2O + 4 H(+)(in) = ADP + phosphate + 5 H(+)(out). Produces ATP from ADP in the presence of a proton gradient across the membrane. The catalytic sites are hosted primarily by the beta subunits. This Aliivibrio fischeri (strain ATCC 700601 / ES114) (Vibrio fischeri) protein is ATP synthase subunit beta.